A 420-amino-acid chain; its full sequence is Pyrophosphate--fructose 6-phosphate 1-phosphotransferase (420 aa).

G13 lines the diphosphate pocket. Substrate contacts are provided by residues 142 to 144 (TVD), 190 to 192 (MGR), E247, and 297 to 300 (YLQR). Catalysis depends on D144, which acts as the Proton acceptor.

Belongs to the phosphofructokinase type A (PFKA) family. PPi-dependent PFK group II subfamily. Clade 'B2' sub-subfamily. As to quaternary structure, homodimer. Mg(2+) is required as a cofactor. Co(2+) serves as cofactor. The cofactor is Mn(2+).

The protein localises to the cytoplasm. The catalysed reaction is beta-D-fructose 6-phosphate + diphosphate = beta-D-fructose 1,6-bisphosphate + phosphate + H(+). Its pathway is carbohydrate degradation; glycolysis; D-glyceraldehyde 3-phosphate and glycerone phosphate from D-glucose: step 3/4. Non-allosteric. Catalyzes the phosphorylation of D-fructose 6-phosphate, the first committing step of glycolysis. Uses inorganic phosphate (PPi) as phosphoryl donor instead of ATP like common ATP-dependent phosphofructokinases (ATP-PFKs), which renders the reaction reversible, and can thus function both in glycolysis and gluconeogenesis. Consistently, PPi-PFK can replace the enzymes of both the forward (ATP-PFK) and reverse (fructose-bisphosphatase (FBPase)) reactions. This is Pyrophosphate--fructose 6-phosphate 1-phosphotransferase from Methylococcus capsulatus (strain ATCC 33009 / NCIMB 11132 / Bath).